A 361-amino-acid chain; its full sequence is Fructose-1,6-bisphosphatase class 1 2 (361 aa).

Positions 110, 134, 136, and 137 each coordinate Mg(2+). Substrate-binding positions include 137–140 (DGSS), asparagine 231, tyrosine 264, and lysine 294. Glutamate 300 lines the Mg(2+) pocket.

It belongs to the FBPase class 1 family. In terms of assembly, homotetramer. Requires Mg(2+) as cofactor.

The protein resides in the cytoplasm. The enzyme catalyses beta-D-fructose 1,6-bisphosphate + H2O = beta-D-fructose 6-phosphate + phosphate. The protein operates within carbohydrate biosynthesis; gluconeogenesis. In Salinibacter ruber (strain DSM 13855 / M31), this protein is Fructose-1,6-bisphosphatase class 1 2.